We begin with the raw amino-acid sequence, 969 residues long: RNA polymerase-associated protein RapA (969 aa).

Residues 164 to 334 (EVGRRHAPRV…FARLRLLDPD (171 aa)) enclose the Helicase ATP-binding domain. 177-184 (DEVGLGKT) provides a ligand contact to ATP. Residues 280–283 (DEAH) carry the DEAH box motif. Residues 492-679 (RVNWLIEKIQ…ESAKLNQSLK (188 aa)) enclose the Helicase C-terminal domain.

It belongs to the SNF2/RAD54 helicase family. RapA subfamily. Interacts with the RNAP. Has a higher affinity for the core RNAP than for the holoenzyme. Its ATPase activity is stimulated by binding to RNAP.

In terms of biological role, transcription regulator that activates transcription by stimulating RNA polymerase (RNAP) recycling in case of stress conditions such as supercoiled DNA or high salt concentrations. Probably acts by releasing the RNAP, when it is trapped or immobilized on tightly supercoiled DNA. Does not activate transcription on linear DNA. Probably not involved in DNA repair. The protein is RNA polymerase-associated protein RapA of Vibrio atlanticus (strain LGP32) (Vibrio splendidus (strain Mel32)).